The following is a 154-amino-acid chain: SsrA-binding protein (154 aa).

The interval 134-154 (QREDLKRRAEDRDTQRELARF) is disordered.

This sequence belongs to the SmpB family.

The protein resides in the cytoplasm. Functionally, required for rescue of stalled ribosomes mediated by trans-translation. Binds to transfer-messenger RNA (tmRNA), required for stable association of tmRNA with ribosomes. tmRNA and SmpB together mimic tRNA shape, replacing the anticodon stem-loop with SmpB. tmRNA is encoded by the ssrA gene; the 2 termini fold to resemble tRNA(Ala) and it encodes a 'tag peptide', a short internal open reading frame. During trans-translation Ala-aminoacylated tmRNA acts like a tRNA, entering the A-site of stalled ribosomes, displacing the stalled mRNA. The ribosome then switches to translate the ORF on the tmRNA; the nascent peptide is terminated with the 'tag peptide' encoded by the tmRNA and targeted for degradation. The ribosome is freed to recommence translation, which seems to be the essential function of trans-translation. The polypeptide is SsrA-binding protein (Nitratidesulfovibrio vulgaris (strain ATCC 29579 / DSM 644 / CCUG 34227 / NCIMB 8303 / VKM B-1760 / Hildenborough) (Desulfovibrio vulgaris)).